We begin with the raw amino-acid sequence, 472 residues long: Pyruvate kinase (472 aa).

Arginine 33 contributes to the substrate binding site. K(+) contacts are provided by asparagine 35, serine 37, and aspartate 67. 35 to 38 (NFSH) lines the ATP pocket. ATP-binding residues include arginine 74 and lysine 155. Glutamate 220 is a Mg(2+) binding site. Residues glycine 243, aspartate 244, and threonine 276 each contribute to the substrate site. Aspartate 244 serves as a coordination point for Mg(2+).

The protein belongs to the pyruvate kinase family. In terms of assembly, homotetramer. It depends on Mg(2+) as a cofactor. K(+) is required as a cofactor.

The enzyme catalyses pyruvate + ATP = phosphoenolpyruvate + ADP + H(+). Its pathway is carbohydrate degradation; glycolysis; pyruvate from D-glyceraldehyde 3-phosphate: step 5/5. This chain is Pyruvate kinase (pyk), found in Mycobacterium tuberculosis (strain CDC 1551 / Oshkosh).